A 416-amino-acid polypeptide reads, in one-letter code: CinA-like protein (416 aa).

The protein belongs to the CinA family.

The protein is CinA-like protein of Nostoc punctiforme (strain ATCC 29133 / PCC 73102).